Reading from the N-terminus, the 231-residue chain is Large ribosomal subunit protein uL1 (231 aa).

It belongs to the universal ribosomal protein uL1 family. Part of the 50S ribosomal subunit.

In terms of biological role, binds directly to 23S rRNA. The L1 stalk is quite mobile in the ribosome, and is involved in E site tRNA release. Its function is as follows. Protein L1 is also a translational repressor protein, it controls the translation of the L11 operon by binding to its mRNA. This chain is Large ribosomal subunit protein uL1, found in Pseudomonas syringae pv. tomato (strain ATCC BAA-871 / DC3000).